Consider the following 412-residue polypeptide: Protein arginine N-methyltransferase 2 (412 aa).

Positions 190–412 constitute an RMT2 domain; the sequence is TAADPDTYLN…YYYHPKISFA (223 aa). S-adenosyl-L-methionine is bound by residues Y197, M227, 250–255, 271–273, 298–299, and D319; these read FGMGII, EAH, and WQ.

Belongs to the class I-like SAM-binding methyltransferase superfamily. RMT2 methyltransferase family. Monomer.

The protein resides in the cytoplasm. It is found in the nucleus. Its function is as follows. S-adenosyl-L-methionine-dependent protein-arginine N-methyltransferase that methylates the delta-nitrogen atom of arginine residues to form N5-methylarginine (type IV) in target proteins. Monomethylates ribosomal protein L12. The polypeptide is Protein arginine N-methyltransferase 2 (Candida glabrata (strain ATCC 2001 / BCRC 20586 / JCM 3761 / NBRC 0622 / NRRL Y-65 / CBS 138) (Yeast)).